We begin with the raw amino-acid sequence, 281 residues long: NADPH-dependent 7-cyano-7-deazaguanine reductase (281 aa).

Residue 87 to 89 participates in substrate binding; the sequence is IES. 89–90 serves as a coordination point for NADPH; the sequence is SK. Residue C188 is the Thioimide intermediate of the active site. D195 serves as the catalytic Proton donor. 227–228 provides a ligand contact to substrate; the sequence is HE. Residue 256 to 257 participates in NADPH binding; it reads RG. Residues 261 to 281 form a disordered region; it reads INPYRSTEQAKPDHNHRMARQ. Basic and acidic residues predominate over residues 268 to 281; it reads EQAKPDHNHRMARQ.

This sequence belongs to the GTP cyclohydrolase I family. QueF type 2 subfamily. Homodimer.

Its subcellular location is the cytoplasm. It carries out the reaction 7-aminomethyl-7-carbaguanine + 2 NADP(+) = 7-cyano-7-deazaguanine + 2 NADPH + 3 H(+). It participates in tRNA modification; tRNA-queuosine biosynthesis. Its function is as follows. Catalyzes the NADPH-dependent reduction of 7-cyano-7-deazaguanine (preQ0) to 7-aminomethyl-7-deazaguanine (preQ1). In Vibrio vulnificus (strain YJ016), this protein is NADPH-dependent 7-cyano-7-deazaguanine reductase.